A 285-amino-acid polypeptide reads, in one-letter code: Cold sensitive U2 snRNA suppressor 2 (285 aa).

One can recognise an RRM 1 domain in the interval 45–130 (TSIYISGLPT…KQIRVERAQF (86 aa)). Over residues 135 to 149 (GDNMHGKENDLKEFN) the composition is skewed to basic and acidic residues. The segment at 135–154 (GDNMHGKENDLKEFNGPEPP) is disordered. The residue at position 163 (Ser-163) is a Phosphoserine. One can recognise an RRM 2 domain in the interval 183–265 (RTVIFANVFN…QKLLAFISGD (83 aa)). The disordered stretch occupies residues 265–285 (DENTSSTSDKNEDSEVEDDLI). Acidic residues predominate over residues 276 to 285 (EDSEVEDDLI).

This sequence belongs to the HTATSF1 family. Interacts with PRP11. Associates with the U2 snRNA.

In terms of biological role, U2 snRNP protein which helps to refold U2 into a structure favorable for its binding to SF3b and SF3a prior to spliceosome assembly. Mediates functional interactions between U2 RNA and PRP5. Enforces ATP dependence during formation of the prespliceosome by brokering an interaction between PRP5 and the U2 snRNP that depends on correct U2 RNA structure. The protein is Cold sensitive U2 snRNA suppressor 2 (CUS2) of Saccharomyces cerevisiae (strain ATCC 204508 / S288c) (Baker's yeast).